The following is a 450-amino-acid chain: Growth/differentiation factor 7 (450 aa).

The first 19 residues, 1 to 19 (MDLSAAAALCLWLLSACRP), serve as a signal peptide directing secretion. A propeptide spanning residues 20 to 321 (RDGLEAAAVL…AVIGGRRRRR (302 aa)) is cleaved from the precursor. Asn83 carries N-linked (GlcNAc...) asparagine glycosylation. The interval 296 to 349 (ASEPLPDPGTGTASPRAVIGGRRRRRTALAGTRTAQGSGGGAGRGHGRRGRSRC) is disordered. The span at 340-349 (GHGRRGRSRC) shows a compositional bias: basic residues. Disulfide bonds link Cys349–Cys415, Cys378–Cys447, and Cys382–Cys449.

This sequence belongs to the TGF-beta family. Homodimer; disulfide-linked.

The protein resides in the secreted. Its function is as follows. May play an active role in the motor area of the primate neocortex. This chain is Growth/differentiation factor 7 (GDF7), found in Homo sapiens (Human).